The primary structure comprises 186 residues: Holliday junction branch migration complex subunit RuvA (186 aa).

Residues 1–61 (MYSYIKGKVV…ENLQILYGFN (61 aa)) form a domain I region. Residues 62–134 (DNKNLLFFKK…LKGDLIFSEK (73 aa)) are domain II. A flexible linker region spans residues 134-135 (KI). The domain III stretch occupies residues 136 to 186 (ILNPKKTELEKILLNLGFVKKEIKSVLNQIDDKKELELMLKEVLLKLAKNI).

This sequence belongs to the RuvA family. As to quaternary structure, homotetramer. Forms an RuvA(8)-RuvB(12)-Holliday junction (HJ) complex. HJ DNA is sandwiched between 2 RuvA tetramers; dsDNA enters through RuvA and exits via RuvB. An RuvB hexamer assembles on each DNA strand where it exits the tetramer. Each RuvB hexamer is contacted by two RuvA subunits (via domain III) on 2 adjacent RuvB subunits; this complex drives branch migration. In the full resolvosome a probable DNA-RuvA(4)-RuvB(12)-RuvC(2) complex forms which resolves the HJ.

The protein localises to the cytoplasm. Functionally, the RuvA-RuvB-RuvC complex processes Holliday junction (HJ) DNA during genetic recombination and DNA repair, while the RuvA-RuvB complex plays an important role in the rescue of blocked DNA replication forks via replication fork reversal (RFR). RuvA specifically binds to HJ cruciform DNA, conferring on it an open structure. The RuvB hexamer acts as an ATP-dependent pump, pulling dsDNA into and through the RuvAB complex. HJ branch migration allows RuvC to scan DNA until it finds its consensus sequence, where it cleaves and resolves the cruciform DNA. This is Holliday junction branch migration complex subunit RuvA from Phytoplasma mali (strain AT).